A 398-amino-acid polypeptide reads, in one-letter code: Acetate kinase (398 aa).

Residue Asn7 coordinates Mg(2+). Lys14 serves as a coordination point for ATP. Arg91 contacts substrate. Asp148 functions as the Proton donor/acceptor in the catalytic mechanism. Residues His208–Gly212, Asp283–Arg285, and Gly331–Asn335 each bind ATP. Position 384 (Glu384) interacts with Mg(2+).

Belongs to the acetokinase family. As to quaternary structure, homodimer. Mg(2+) is required as a cofactor. The cofactor is Mn(2+).

The protein localises to the cytoplasm. The catalysed reaction is acetate + ATP = acetyl phosphate + ADP. It participates in metabolic intermediate biosynthesis; acetyl-CoA biosynthesis; acetyl-CoA from acetate: step 1/2. Functionally, catalyzes the formation of acetyl phosphate from acetate and ATP. Can also catalyze the reverse reaction. The polypeptide is Acetate kinase (Halothermothrix orenii (strain H 168 / OCM 544 / DSM 9562)).